The sequence spans 490 residues: tRNA-guanine(15) transglycosylase (490 aa).

The active-site Nucleophile is D92. Substrate contacts are provided by D127 and A195. Positions 278, 280, and 283 each coordinate Zn(2+).

It belongs to the archaeosine tRNA-ribosyltransferase family. Requires Zn(2+) as cofactor.

The catalysed reaction is guanosine(15) in tRNA + 7-cyano-7-deazaguanine = 7-cyano-7-carbaguanosine(15) in tRNA + guanine. It participates in tRNA modification; archaeosine-tRNA biosynthesis. In terms of biological role, exchanges the guanine residue with 7-cyano-7-deazaguanine (preQ0) at position 15 in the dihydrouridine loop (D-loop) of archaeal tRNAs. The polypeptide is tRNA-guanine(15) transglycosylase (Haloarcula marismortui (strain ATCC 43049 / DSM 3752 / JCM 8966 / VKM B-1809) (Halobacterium marismortui)).